The sequence spans 484 residues: Sodium-dependent glucose transporter 1 (484 aa).

At serine 6 the chain carries Phosphoserine. 12 helical membrane passes run 40-60 (WFTTVVLNAAFLGMGVSAAVL), 80-100 (EIFVGRALGYLGGSVVGGVLF), 106-126 (FLLLGLSHLLTAAGLYLTPFC), 135-155 (MMSITGVSFGVLDTGGNVLIL), 168-188 (ALHFSFALGAFLAPLLAKLAW), 227-247 (LLWAYASIGTYVLVLSVFLFA), 274-294 (ALLCLLFLFFFFYVGAEVTYG), 317-337 (SIFWGTFAACRGLAIFFATLL), 340-360 (GTMMVLCNIGSLASSFFLVLF), 366-386 (CLWIASSVYGASMAATFPSGI), 401-421 (AFILVGAALGLMATPALSGIL), and 428-448 (LPVILYMCLGSAVLTTVLFPV).

It belongs to the major facilitator superfamily. In terms of tissue distribution, expressed in brain, liver, lung, and kidney. In kidney expressed in cortex and inner medulla, in ascending thin limbs (ATLs) and lower descending thin limbs (DTLs). Primarily expressed in the proximal tubules of the kidney.

The protein resides in the apical cell membrane. May function as a sodium-dependent glucose transporter. Potential channels for urea in the inner medulla of kidney. In Rattus norvegicus (Rat), this protein is Sodium-dependent glucose transporter 1.